The following is a 244-amino-acid chain: UDP-2,3-diacylglucosamine hydrolase (244 aa).

Mn(2+)-binding residues include aspartate 8, histidine 10, aspartate 41, asparagine 79, and histidine 114. 79–80 is a binding site for substrate; the sequence is NR. Substrate contacts are provided by aspartate 122, lysine 164, lysine 167, and histidine 195. Residues histidine 195 and histidine 197 each contribute to the Mn(2+) site.

This sequence belongs to the LpxH family. It depends on Mn(2+) as a cofactor.

Its subcellular location is the cell inner membrane. It catalyses the reaction UDP-2-N,3-O-bis[(3R)-3-hydroxytetradecanoyl]-alpha-D-glucosamine + H2O = 2-N,3-O-bis[(3R)-3-hydroxytetradecanoyl]-alpha-D-glucosaminyl 1-phosphate + UMP + 2 H(+). Its pathway is glycolipid biosynthesis; lipid IV(A) biosynthesis; lipid IV(A) from (3R)-3-hydroxytetradecanoyl-[acyl-carrier-protein] and UDP-N-acetyl-alpha-D-glucosamine: step 4/6. Hydrolyzes the pyrophosphate bond of UDP-2,3-diacylglucosamine to yield 2,3-diacylglucosamine 1-phosphate (lipid X) and UMP by catalyzing the attack of water at the alpha-P atom. Involved in the biosynthesis of lipid A, a phosphorylated glycolipid that anchors the lipopolysaccharide to the outer membrane of the cell. This is UDP-2,3-diacylglucosamine hydrolase from Vibrio atlanticus (strain LGP32) (Vibrio splendidus (strain Mel32)).